Here is a 626-residue protein sequence, read N- to C-terminus: MGSRTTISILVVLLLGLVQLAISGHDYKQALSKSILFFEAQRSGHLPPNQRVSWRSHSGLYDGKSSGVDLVGGYYDAGDNVKFGLPMAFTVTTMCWSIIEYGGQLESNGELGHAIDAVKWGTDYFIKAHPEPNVLYGEVGDGKSDHYCWQRPEEMTTDRRAYKIDRNNPGSDLAGETAAAMAAASIVFRRSDPSYSAELLRHAHQLFEFADKYRGKYDSSITVAQKYYRSVSGYNDELLWAAAWLYQATNDKYYLDYLGKNGDSMGGTGWSMTEFGWDVKYAGVQTLVAKVLMQGKGGEHTAVFERYQQKAEQFMCSLLGKSTKNIKKTPGGLIFRQSWNNMQFVTSASFLATVYSDYLSYSKRDLLCSQGNISPSQLLEFSKSQVDYILGDNPRATSYMVGYGENYPRQVHHRGSSIVSFNVDQKFVTCRGGYATWFSRKGSDPNVLTGALVGGPDAYDNFADQRDNYEQTEPATYNNAPLLGVLARLISGSTGFDQLLPGVSPTPSPVIIKPAPVPQRKPTKPPAASSPSPITISQKMTNSWKNEGKVYYRYSTILTNRSTKTLKILKISITKLYGPIWGVTKTGNSFSFPSWMQSLPSGKSMEFVYIHSASPADVLVSNYSLE.

The N-terminal stretch at 1 to 23 (MGSRTTISILVVLLLGLVQLAIS) is a signal peptide. Asp79 (nucleophile) is an active-site residue. Active-site residues include His412, Asp464, and Glu473. The interval 515–536 (APVPQRKPTKPPAASSPSPITI) is disordered. Low complexity predominate over residues 526 to 536 (PAASSPSPITI). 2 N-linked (GlcNAc...) asparagine glycosylation sites follow: Asn560 and Asn622.

The protein belongs to the glycosyl hydrolase 9 (cellulase E) family.

It localises to the secreted. The catalysed reaction is Endohydrolysis of (1-&gt;4)-beta-D-glucosidic linkages in cellulose, lichenin and cereal beta-D-glucans.. This Arabidopsis thaliana (Mouse-ear cress) protein is Endoglucanase 19.